We begin with the raw amino-acid sequence, 621 residues long: 1-deoxy-D-xylulose-5-phosphate synthase (621 aa).

Residues H80 and G121–S123 each bind thiamine diphosphate. Residue D152 participates in Mg(2+) binding. Residues G153–A154, N181, Y288, and E370 each bind thiamine diphosphate. N181 lines the Mg(2+) pocket.

It belongs to the transketolase family. DXPS subfamily. Homodimer. It depends on Mg(2+) as a cofactor. Thiamine diphosphate is required as a cofactor.

It carries out the reaction D-glyceraldehyde 3-phosphate + pyruvate + H(+) = 1-deoxy-D-xylulose 5-phosphate + CO2. The protein operates within metabolic intermediate biosynthesis; 1-deoxy-D-xylulose 5-phosphate biosynthesis; 1-deoxy-D-xylulose 5-phosphate from D-glyceraldehyde 3-phosphate and pyruvate: step 1/1. Its function is as follows. Catalyzes the acyloin condensation reaction between C atoms 2 and 3 of pyruvate and glyceraldehyde 3-phosphate to yield 1-deoxy-D-xylulose-5-phosphate (DXP). The sequence is that of 1-deoxy-D-xylulose-5-phosphate synthase from Shewanella frigidimarina (strain NCIMB 400).